Consider the following 324-residue polypeptide: Galectin-4 (324 aa).

2 Galectin domains span residues 19–150 (YKRP…INFL) and 196–324 (YVGT…YVQI). 257–263 (WGSEERK) contacts a beta-D-galactoside. Position 259 is a phosphoserine (serine 259).

Monomer. As to expression, highly expressed in full-length form in small and large intestine and stomach but was not detected in other tissues including lung, liver, kidney and spleen.

Its function is as follows. Galectin that binds lactose and a related range of sugars. This is Galectin-4 (Lgals4) from Rattus norvegicus (Rat).